The primary structure comprises 414 residues: Phosphoglycerate kinase (414 aa).

Residues D20–N22, R37, H60–R63, R117, and R164 contribute to the substrate site. Residues E338 and G364–L367 each bind ATP.

This sequence belongs to the phosphoglycerate kinase family. As to quaternary structure, monomer.

It is found in the cytoplasm. The catalysed reaction is (2R)-3-phosphoglycerate + ATP = (2R)-3-phospho-glyceroyl phosphate + ADP. Its pathway is carbohydrate degradation; glycolysis; pyruvate from D-glyceraldehyde 3-phosphate: step 2/5. In Methanococcus maripaludis (strain DSM 14266 / JCM 13030 / NBRC 101832 / S2 / LL), this protein is Phosphoglycerate kinase.